Consider the following 101-residue polypeptide: Small ribosomal subunit protein uS14 (101 aa).

The protein belongs to the universal ribosomal protein uS14 family. As to quaternary structure, part of the 30S ribosomal subunit. Contacts proteins S3 and S10.

In terms of biological role, binds 16S rRNA, required for the assembly of 30S particles and may also be responsible for determining the conformation of the 16S rRNA at the A site. In Acinetobacter baylyi (strain ATCC 33305 / BD413 / ADP1), this protein is Small ribosomal subunit protein uS14.